Reading from the N-terminus, the 120-residue chain is MEQLTKNQAVATSQEAFQNQNEPQLRDENVHNDKSVHGVLNPTYQAGLRRDAVQPDIEAERKKRDEIEAGKSYCSRRFGGATCDDKSAQIYARFDKNDWRIQPAEFYRFHDAEVNTFGYF.

Polar residues predominate over residues 1–23 (MEQLTKNQAVATSQEAFQNQNEP). The interval 1–64 (MEQLTKNQAV…PDIEAERKKR (64 aa)) is disordered. 2 stretches are compositionally biased toward basic and acidic residues: residues 24–36 (QLRDENVHNDKSV) and 48–64 (LRRDAVQPDIEAERKKR).

The protein belongs to the microviridae B protein family. As to quaternary structure, component of the procapsid complex composed of 60 copies of the internally located B, 240 copies of the external scaffolding protein D, 60 copies of each of the viral structural proteins F and G proteins, and 12 copies of H. In terms of processing, the proteolytic cleavage of the internal scaffolding protein B releases the scaffold protein in order to continue virion assembly.

It is found in the host cytoplasm. Its function is as follows. Participates in the assembly of the viral procapsid in the cytoplasm. Forms first a 12S pre-assembly complex with protein H, and F and G pentamers, then twelve 12S complexes are joined by the D protein to form the procapsid. Internal scaffold protein B is released from the procapsid upon genome packaging. Autoproteolytic activity cleaves protein B and probably facilitates its removal through the pores of the procapsid. In Enterobacteria phage S13 (Bacteriophage S13), this protein is Internal scaffolding protein B (B).